The following is a 148-amino-acid chain: Large ribosomal subunit protein uL15 (148 aa).

The disordered stretch occupies residues 1-61 (MELNNLKPAI…GGQMPMQRRL (61 aa)). The segment covering 30–39 (TATKGHKGQK) has biased composition (basic residues).

Belongs to the universal ribosomal protein uL15 family. Part of the 50S ribosomal subunit.

Its function is as follows. Binds to the 23S rRNA. The protein is Large ribosomal subunit protein uL15 of Geobacter metallireducens (strain ATCC 53774 / DSM 7210 / GS-15).